A 558-amino-acid polypeptide reads, in one-letter code: UvrABC system protein C (558 aa).

Residues 12 to 92 (LLPGVYIFYG…IFNHKPKYNV (81 aa)) enclose the GIY-YIG domain. Positions 200–235 (SETLDLIEEKMKKHAKMMDFENAAKYRDLLVKFENV) constitute a UVR domain.

It belongs to the UvrC family. As to quaternary structure, interacts with UvrB in an incision complex.

Its subcellular location is the cytoplasm. Functionally, the UvrABC repair system catalyzes the recognition and processing of DNA lesions. UvrC both incises the 5' and 3' sides of the lesion. The N-terminal half is responsible for the 3' incision and the C-terminal half is responsible for the 5' incision. In Pseudothermotoga lettingae (strain ATCC BAA-301 / DSM 14385 / NBRC 107922 / TMO) (Thermotoga lettingae), this protein is UvrABC system protein C.